We begin with the raw amino-acid sequence, 90 residues long: Bombyxin G-1 (90 aa).

Residues 1–19 (MKLIIFVVFCITIYGSTSG) form the signal peptide. Intrachain disulfides connect cysteine 28-cysteine 77, cysteine 40-cysteine 90, and cysteine 76-cysteine 81. Positions 49–67 (NTQYEGYHWPLLAYSEERI) are cleaved as a propeptide — c peptide like.

The protein belongs to the insulin family. Heterodimer of a B chain and an A chain linked by two disulfide bonds.

Its subcellular location is the secreted. The chain is Bombyxin G-1 (BBXG1) from Bombyx mori (Silk moth).